The primary structure comprises 663 residues: A-type ATP synthase subunit I (663 aa).

A run of 7 helical transmembrane segments spans residues 376–396, 412–432, 468–488, 497–517, 534–554, 568–588, and 589–609; these read FFFGFMLTDFLYGLIVGIVAA, FAYILLWSAFFTMLLGALFGS, LAALAIGLAHLFLGYTLGFVI, GAVFEQLPWMIIIIGVALLAS, IALFAVGELVINGGLAALMII, ARLMALALATGGIAMVINVLV, and GMVWAIKFLYIGPIIGLIIFF.

This sequence belongs to the V-ATPase 116 kDa subunit family. In terms of assembly, has multiple subunits with at least A(3), B(3), C, D, E, F, H, I and proteolipid K(x).

It is found in the cell membrane. Functionally, component of the A-type ATP synthase that produces ATP from ADP in the presence of a proton gradient across the membrane. The protein is A-type ATP synthase subunit I of Thermococcus kodakarensis (strain ATCC BAA-918 / JCM 12380 / KOD1) (Pyrococcus kodakaraensis (strain KOD1)).